The sequence spans 299 residues: 4-diphosphocytidyl-2-C-methyl-D-erythritol kinase (299 aa).

The active site involves lysine 17. 103–113 (PVASGIGGGSG) contacts ATP. Residue aspartate 145 is part of the active site.

It belongs to the GHMP kinase family. IspE subfamily.

It carries out the reaction 4-CDP-2-C-methyl-D-erythritol + ATP = 4-CDP-2-C-methyl-D-erythritol 2-phosphate + ADP + H(+). It participates in isoprenoid biosynthesis; isopentenyl diphosphate biosynthesis via DXP pathway; isopentenyl diphosphate from 1-deoxy-D-xylulose 5-phosphate: step 3/6. Catalyzes the phosphorylation of the position 2 hydroxy group of 4-diphosphocytidyl-2C-methyl-D-erythritol. The sequence is that of 4-diphosphocytidyl-2-C-methyl-D-erythritol kinase from Bartonella tribocorum (strain CIP 105476 / IBS 506).